The primary structure comprises 910 residues: Valine--tRNA ligase (910 aa).

The 'HIGH' region signature appears at 46-56 (PNVTGSLHMGH). The 'KMSKS' region signature appears at 539–543 (KMSKS). Lys-542 lines the ATP pocket. A coiled-coil region spans residues 845–909 (DLDILRNKIQ…QMLQERLKML (65 aa)).

This sequence belongs to the class-I aminoacyl-tRNA synthetase family. ValS type 1 subfamily. As to quaternary structure, monomer.

Its subcellular location is the cytoplasm. It carries out the reaction tRNA(Val) + L-valine + ATP = L-valyl-tRNA(Val) + AMP + diphosphate. Its function is as follows. Catalyzes the attachment of valine to tRNA(Val). As ValRS can inadvertently accommodate and process structurally similar amino acids such as threonine, to avoid such errors, it has a 'posttransfer' editing activity that hydrolyzes mischarged Thr-tRNA(Val) in a tRNA-dependent manner. This Synechocystis sp. (strain ATCC 27184 / PCC 6803 / Kazusa) protein is Valine--tRNA ligase.